The chain runs to 187 residues: UPF0669 protein C6orf120 homolog (187 aa).

An N-terminal signal peptide occupies residues 1–23 (MVEYWKRNFFMVLVLQAFYLANC). Asn47 carries N-linked (GlcNAc...) asparagine glycosylation.

This sequence belongs to the UPF0669 family.

Its subcellular location is the secreted. This Xenopus tropicalis (Western clawed frog) protein is UPF0669 protein C6orf120 homolog.